A 360-amino-acid polypeptide reads, in one-letter code: Decorin (360 aa).

The N-terminal stretch at 1 to 16 is a signal peptide; it reads MKATIIFLLLAQVSWA. Positions 17–30 are excised as a propeptide; the sequence is GPFQQRGLFDFMLE. O-linked (Xyl...) (glycosaminoglycan) serine glycosylation is present at Ser34. Cystine bridges form between Cys55-Cys61 and Cys59-Cys68. LRR repeat units follow at residues 74–94, 95–118, 119–142, 143–163, 164–187, 188–213, 214–234, 235–258, 259–282, 283–305, 306–335, and 336–360; these read DKVPKDLPPDTTLLDLQNNKI, TEIKDGDFKNLKNLHTLILVNNKI, SKISPGAFTPLLKLERLYLSKNHL, KELPEKMPKTLQELRAHENEI, TKVRKAVFNGLNQMIVVELGTNPL, KSSGIENGAFQGMKKLSYIRIADTNI, TTIPQGLPPSLTELHLEGNKI, TKVDASSLKGLNNLAKLGLSFNSI, SAVDNGTLANTPHLRELHLDNNKL, IRVPGGLAEHKYIQVVYLHNNNI, SAVGSNDFCPPGYNTKKASYSGVSLFSNPV, and QYWEIQPSTFRCVYVRSAIQLGNYK. N-linked (GlcNAc...) asparagine glycosylation occurs at Asn212. Residues Asn263 and Asn304 are each glycosylated (N-linked (GlcNAc...) asparagine). Cys314 and Cys347 form a disulfide bridge.

Belongs to the small leucine-rich proteoglycan (SLRP) family. SLRP class I subfamily. As to quaternary structure, binds to type I and type II collagen, fibronectin and TGF-beta. Forms a ternary complex with MFAP2 and ELN. Interacts with DPT. The attached glycosaminoglycan chain can be either chondroitin sulfate or dermatan sulfate depending upon the tissue of origin.

The protein localises to the secreted. Its subcellular location is the extracellular space. It localises to the extracellular matrix. In terms of biological role, may affect the rate of fibrils formation. This chain is Decorin (DCN), found in Canis lupus familiaris (Dog).